Consider the following 234-residue polypeptide: Large ribosomal subunit protein uL1 (234 aa).

This sequence belongs to the universal ribosomal protein uL1 family. Part of the 50S ribosomal subunit.

Binds directly to 23S rRNA. The L1 stalk is quite mobile in the ribosome, and is involved in E site tRNA release. In terms of biological role, protein L1 is also a translational repressor protein, it controls the translation of the L11 operon by binding to its mRNA. The sequence is that of Large ribosomal subunit protein uL1 from Maridesulfovibrio salexigens (strain ATCC 14822 / DSM 2638 / NCIMB 8403 / VKM B-1763) (Desulfovibrio salexigens).